The following is a 147-amino-acid chain: MKRKTLPLLALVATTLFLIACDDRSDDLKAISKFKDLTPPRFSDVVSHQDDVSEEWSQVDYLSGPTLQVLRTRQSPDGCEDGSYYYLVDMQEKTVQPLMNALCIADNIKLEYQEVTDPYTKEKYFEYAHDGKLMGQLLIPSNPDNQE.

The N-terminal stretch at 1–20 is a signal peptide; the sequence is MKRKTLPLLALVATTLFLIA. Residue Cys-21 is the site of N-palmitoyl cysteine attachment. Cys-21 is lipidated: S-diacylglycerol cysteine.

The protein to E.coli YfjS.

The protein resides in the cell inner membrane. Its function is as follows. When overproduced strongly induces degP through the activation of the two-component envelope stress response system CpxA/CpxR. This Escherichia coli (strain K12) protein is Lipoprotein YafY (yafY).